Reading from the N-terminus, the 486-residue chain is 23S rRNA (uracil(1939)-C(5))-methyltransferase RlmD (486 aa).

The 63-residue stretch at alanine 14–alanine 76 folds into the TRAM domain. The [4Fe-4S] cluster site is built by cysteine 89, cysteine 99, cysteine 102, and cysteine 181. The S-adenosyl-L-methionine site is built by glutamine 289, phenylalanine 318, asparagine 323, glutamate 339, asparagine 374, and aspartate 395. Cysteine 442 functions as the Nucleophile in the catalytic mechanism.

This sequence belongs to the class I-like SAM-binding methyltransferase superfamily. RNA M5U methyltransferase family. RlmD subfamily.

The catalysed reaction is uridine(1939) in 23S rRNA + S-adenosyl-L-methionine = 5-methyluridine(1939) in 23S rRNA + S-adenosyl-L-homocysteine + H(+). Catalyzes the formation of 5-methyl-uridine at position 1939 (m5U1939) in 23S rRNA. This Verminephrobacter eiseniae (strain EF01-2) protein is 23S rRNA (uracil(1939)-C(5))-methyltransferase RlmD.